The sequence spans 115 residues: NADH-ubiquinone oxidoreductase chain 3 (115 aa).

3 consecutive transmembrane segments (helical) span residues 3–23 (LLMALFIDASLSLILISIAFW), 55–75 (FFLVAITFLLFDLEIALLLPL), and 84–104 (LSAMMVTSFILISVLALGLMY).

This sequence belongs to the complex I subunit 3 family. In terms of assembly, core subunit of respiratory chain NADH dehydrogenase (Complex I) which is composed of 45 different subunits. Interacts with TMEM186. Interacts with TMEM242.

The protein resides in the mitochondrion inner membrane. The enzyme catalyses a ubiquinone + NADH + 5 H(+)(in) = a ubiquinol + NAD(+) + 4 H(+)(out). Core subunit of the mitochondrial membrane respiratory chain NADH dehydrogenase (Complex I) which catalyzes electron transfer from NADH through the respiratory chain, using ubiquinone as an electron acceptor. Essential for the catalytic activity of complex I. The protein is NADH-ubiquinone oxidoreductase chain 3 of Sigmodon ochrognathus (Yellow-nosed cotton rat).